The primary structure comprises 380 residues: Cytochrome b (380 aa).

4 consecutive transmembrane segments (helical) span residues 34 to 54, 78 to 99, 114 to 134, and 179 to 199; these read FGSL…LLAA, WLIR…YLHI, WNTG…GYVL, and FFTL…IHLT. 2 residues coordinate heme b: histidine 84 and histidine 98. The heme b site is built by histidine 183 and histidine 197. Histidine 202 is an a ubiquinone binding site. A run of 4 helical transmembrane segments spans residues 227–247, 289–309, 321–341, and 348–368; these read LKDI…ALFS, LGGV…PLLH, FSQL…WVGS, and FIII…ILFP.

This sequence belongs to the cytochrome b family. The cytochrome bc1 complex contains 11 subunits: 3 respiratory subunits (MT-CYB, CYC1 and UQCRFS1), 2 core proteins (UQCRC1 and UQCRC2) and 6 low-molecular weight proteins (UQCRH/QCR6, UQCRB/QCR7, UQCRQ/QCR8, UQCR10/QCR9, UQCR11/QCR10 and a cleavage product of UQCRFS1). This cytochrome bc1 complex then forms a dimer. Heme b is required as a cofactor.

The protein resides in the mitochondrion inner membrane. Functionally, component of the ubiquinol-cytochrome c reductase complex (complex III or cytochrome b-c1 complex) that is part of the mitochondrial respiratory chain. The b-c1 complex mediates electron transfer from ubiquinol to cytochrome c. Contributes to the generation of a proton gradient across the mitochondrial membrane that is then used for ATP synthesis. This Antigone antigone (Sarus crane) protein is Cytochrome b (MT-CYB).